A 280-amino-acid polypeptide reads, in one-letter code: Ribosomal RNA small subunit methyltransferase A (280 aa).

6 residues coordinate S-adenosyl-L-methionine: N28, L30, G55, E77, D103, and N122.

This sequence belongs to the class I-like SAM-binding methyltransferase superfamily. rRNA adenine N(6)-methyltransferase family. RsmA subfamily.

The protein localises to the cytoplasm. The enzyme catalyses adenosine(1518)/adenosine(1519) in 16S rRNA + 4 S-adenosyl-L-methionine = N(6)-dimethyladenosine(1518)/N(6)-dimethyladenosine(1519) in 16S rRNA + 4 S-adenosyl-L-homocysteine + 4 H(+). Its function is as follows. Specifically dimethylates two adjacent adenosines (A1518 and A1519) in the loop of a conserved hairpin near the 3'-end of 16S rRNA in the 30S particle. May play a critical role in biogenesis of 30S subunits. This is Ribosomal RNA small subunit methyltransferase A from Dinoroseobacter shibae (strain DSM 16493 / NCIMB 14021 / DFL 12).